Consider the following 1295-residue polypeptide: Phosphoribosylformylglycinamidine synthase (1295 aa).

Positions 305-327 are disordered; the sequence is WPGAATGSGGEIRDEGATGRGAK. Residues 307-318, 386-388, and Ala-678 each bind ATP; these read GAATGSGGEIRD and TGY. Residues Asp-679, Glu-718, Asn-722, and Asp-884 each contribute to the Mg(2+) site. An ATP-binding site is contributed by Ser-886. In terms of domain architecture, Glutamine amidotransferase type-1 spans 1041 to 1295; the sequence is KVAVLREQGG…IFRNARKQLG (255 aa). The active-site Nucleophile is the Cys-1135. Active-site residues include His-1260 and Glu-1262.

The protein in the N-terminal section; belongs to the FGAMS family. As to quaternary structure, monomer.

The protein resides in the cytoplasm. The enzyme catalyses N(2)-formyl-N(1)-(5-phospho-beta-D-ribosyl)glycinamide + L-glutamine + ATP + H2O = 2-formamido-N(1)-(5-O-phospho-beta-D-ribosyl)acetamidine + L-glutamate + ADP + phosphate + H(+). It functions in the pathway purine metabolism; IMP biosynthesis via de novo pathway; 5-amino-1-(5-phospho-D-ribosyl)imidazole from N(2)-formyl-N(1)-(5-phospho-D-ribosyl)glycinamide: step 1/2. Phosphoribosylformylglycinamidine synthase involved in the purines biosynthetic pathway. Catalyzes the ATP-dependent conversion of formylglycinamide ribonucleotide (FGAR) and glutamine to yield formylglycinamidine ribonucleotide (FGAM) and glutamate. In Salmonella choleraesuis (strain SC-B67), this protein is Phosphoribosylformylglycinamidine synthase.